A 364-amino-acid polypeptide reads, in one-letter code: Pectinesterase (364 aa).

Positions 1–22 are cleaved as a signal peptide; sequence MSCIAVEAVLLGILLYIPIVLS. The N-linked (GlcNAc...) asparagine glycan is linked to N103. Residue D220 is part of the active site.

The protein localises to the secreted. It carries out the reaction [(1-&gt;4)-alpha-D-galacturonosyl methyl ester](n) + n H2O = [(1-&gt;4)-alpha-D-galacturonosyl](n) + n methanol + n H(+). The protein operates within glycan metabolism; pectin degradation; 2-dehydro-3-deoxy-D-gluconate from pectin: step 1/5. Functionally, catalyzes the demethylesterification of homogalacturonan components of pectin. The sequence is that of Pectinesterase from Parthenium hysterophorus (Santa Maria feverfew).